The chain runs to 467 residues: Siroheme synthase 2 (467 aa).

A precorrin-2 dehydrogenase /sirohydrochlorin ferrochelatase region spans residues 1 to 204; that stretch reads MDYLPIFCQL…NDVALAERQI (204 aa). NAD(+)-binding positions include 22 to 23 and 43 to 44; these read EI and CS. S128 carries the post-translational modification Phosphoserine. The uroporphyrinogen-III C-methyltransferase stretch occupies residues 216-467; sequence GEVVLVGAGP…EPSQPLAQMA (252 aa). P225 contacts S-adenosyl-L-methionine. Residue D248 is the Proton acceptor of the active site. Catalysis depends on K270, which acts as the Proton donor. Residues 301 to 303, I306, 331 to 332, M382, and G411 each bind S-adenosyl-L-methionine; these read GGD and TA.

It in the N-terminal section; belongs to the precorrin-2 dehydrogenase / sirohydrochlorin ferrochelatase family. The protein in the C-terminal section; belongs to the precorrin methyltransferase family.

The catalysed reaction is uroporphyrinogen III + 2 S-adenosyl-L-methionine = precorrin-2 + 2 S-adenosyl-L-homocysteine + H(+). The enzyme catalyses precorrin-2 + NAD(+) = sirohydrochlorin + NADH + 2 H(+). It carries out the reaction siroheme + 2 H(+) = sirohydrochlorin + Fe(2+). The protein operates within cofactor biosynthesis; adenosylcobalamin biosynthesis; precorrin-2 from uroporphyrinogen III: step 1/1. Its pathway is cofactor biosynthesis; adenosylcobalamin biosynthesis; sirohydrochlorin from precorrin-2: step 1/1. It participates in porphyrin-containing compound metabolism; siroheme biosynthesis; precorrin-2 from uroporphyrinogen III: step 1/1. It functions in the pathway porphyrin-containing compound metabolism; siroheme biosynthesis; siroheme from sirohydrochlorin: step 1/1. The protein operates within porphyrin-containing compound metabolism; siroheme biosynthesis; sirohydrochlorin from precorrin-2: step 1/1. Its function is as follows. Multifunctional enzyme that catalyzes the SAM-dependent methylations of uroporphyrinogen III at position C-2 and C-7 to form precorrin-2 via precorrin-1. Then it catalyzes the NAD-dependent ring dehydrogenation of precorrin-2 to yield sirohydrochlorin. Finally, it catalyzes the ferrochelation of sirohydrochlorin to yield siroheme. The polypeptide is Siroheme synthase 2 (Serratia proteamaculans (strain 568)).